The chain runs to 338 residues: Probable 1-aminocyclopropane-1-carboxylate deaminase (338 aa).

Lys-51 bears the N6-(pyridoxal phosphate)lysine mark. The active-site Nucleophile is the Ser-78.

Belongs to the ACC deaminase/D-cysteine desulfhydrase family. Requires pyridoxal 5'-phosphate as cofactor.

It catalyses the reaction 1-aminocyclopropane-1-carboxylate + H2O = 2-oxobutanoate + NH4(+). Functionally, catalyzes a cyclopropane ring-opening reaction, the irreversible conversion of 1-aminocyclopropane-1-carboxylate (ACC) to ammonia and alpha-ketobutyrate. The sequence is that of Probable 1-aminocyclopropane-1-carboxylate deaminase from Schizosaccharomyces pombe (strain 972 / ATCC 24843) (Fission yeast).